A 172-amino-acid chain; its full sequence is Large ribosomal subunit protein uL5 (172 aa).

It belongs to the universal ribosomal protein uL5 family. As to quaternary structure, component of the large ribosomal subunit.

It localises to the nucleus. It is found in the cytoplasm. In terms of biological role, component of the ribosome, a large ribonucleoprotein complex responsible for the synthesis of proteins in the cell. The small ribosomal subunit (SSU) binds messenger RNAs (mRNAs) and translates the encoded message by selecting cognate aminoacyl-transfer RNA (tRNA) molecules. The large subunit (LSU) contains the ribosomal catalytic site termed the peptidyl transferase center (PTC), which catalyzes the formation of peptide bonds, thereby polymerizing the amino acids delivered by tRNAs into a polypeptide chain. The nascent polypeptides leave the ribosome through a tunnel in the LSU and interact with protein factors that function in enzymatic processing, targeting, and the membrane insertion of nascent chains at the exit of the ribosomal tunnel. In Tetrahymena thermophila, this protein is Large ribosomal subunit protein uL5 (RPL11).